Reading from the N-terminus, the 182-residue chain is pEARLI1-like lipid transfer protein 2 (182 aa).

A signal peptide spans 1–25 (MASKNSASLALFFALNILFFTLTAG). Positions 33–92 (SPKPRPLPNPKVPSPKVPTPSVPSPYVPTPSVPSPSVPTPSVPSPSVPSPNPTPVIPPRT) are enriched in pro residues. Positions 33-94 (SPKPRPLPNP…TPVIPPRTPG (62 aa)) are disordered. Tandem repeats lie at residues 42–46 (PKVPS), 47–51 (PKVPT), 52–56 (PSVPS), 62–66 (PSVPS), 67–71 (PSVPT), 72–76 (PSVPS), and 77–81 (PSVPS). The tract at residues 42 to 81 (PKVPSPKVPTPSVPSPYVPTPSVPSPSVPTPSVPSPSVPS) is 7 X 5 AA repeats of P-[KS]-V-P-[ST].

The protein belongs to the plant LTP family. PEARLI1 subfamily.

It is found in the secreted. The protein resides in the cell wall. In terms of biological role, probable lipid transfer protein (LTP). May improve freezing survival. Seems to control the flowering process and lignin synthesis. Confers resistance to Botrytis cinerea. The chain is pEARLI1-like lipid transfer protein 2 from Arabidopsis thaliana (Mouse-ear cress).